The following is a 391-amino-acid chain: Phosphoprotein (391 aa).

Phosphothreonine is present on residues threonine 10 and threonine 16. Over residues 54–65 the composition is skewed to polar residues; sequence QKNIQHPTASHQ. 2 disordered regions span residues 54–97 and 148–185; these read QKNI…PEPL and PVTE…ERSG. Serine 69 is subject to Phosphoserine. A phosphothreonine mark is found at threonine 91, threonine 150, and threonine 165. Serine 188 bears the Phosphoserine mark. The tract at residues 216–279 is multimerization; the sequence is ISANEIMDLL…MATVKIMDPG (64 aa). Positions 218-245 form a coiled coil; sequence ANEIMDLLRGMDARLQHLEQKVDKVLAQ. Threonine 250 is modified (phosphothreonine). The residue at position 257 (serine 257) is a Phosphoserine. Threonine 258 and threonine 282 each carry phosphothreonine. Serine 292 and serine 294 each carry phosphoserine. Threonine 298 is modified (phosphothreonine). 2 positions are modified to phosphoserine: serine 301 and serine 374. The interval 343–391 is interaction with the nucleoprotein; it reads AGRKVMITKMITDCVANPQMKQAFEQRLAKASTEDALNDIKRDIIRSAI. Position 375 is a phosphothreonine (threonine 375).

The protein belongs to the rubulavirus/avulavirus P protein family. In terms of assembly, homotetramer. Interacts (via multimerization domain) with polymerase L; this interaction forms the polymerase L-P complex. Interacts (via N-terminus) with N0 (via Ncore); this interaction allows P to chaperon N0 to avoid N polymerization before encapsidation. Interacts (via C-terminus) with N-RNA template; this interaction positions the polymerase on the template for both transcription and replication. Interacts with host RPS6KB1 kinase; this interaction may play a role in the viral replication and transcription.

Its function is as follows. Essential cofactor of the RNA polymerase L that plays a central role in the transcription and replication by forming the polymerase complex with RNA polymerase L and recruiting L to the genomic N-RNA template for RNA synthesis. Also plays a central role in the encapsidation of nascent RNA chains by forming the encapsidation complex with the nucleocapsid protein N (N-P complex). Acts as a chaperone for newly synthesized free N protein, so-called N0, allowing encapsidation of nascent RNA chains during replication. The nucleoprotein protein N prevents excessive phosphorylation of P, which leads to down-regulation of viral transcription/ replication. Participates, together with N, in the formation of viral factories (viroplasms), which are large inclusions in the host cytoplasm where replication takes place. The protein is Phosphoprotein (P/V) of Homo sapiens (Human).